An 818-amino-acid chain; its full sequence is FAD-dependent monooxygenase anuJ (818 aa).

Residues Glu46, Ala60, Arg122, Asp329, and Gly342 each contribute to the FAD site. The next 3 membrane-spanning stretches (helical) occupy residues Val471 to Val491, Phe539 to Val559, and Leu571 to Ile591. Asn614 is a glycosylation site (N-linked (GlcNAc...) asparagine). Transmembrane regions (helical) follow at residues Ile621–Val641 and Ala647–Ala667. An N-linked (GlcNAc...) asparagine glycan is attached at Asn683. 2 helical membrane passes run Trp743–Leu763 and Phe778–Leu798.

Belongs to the paxM FAD-dependent monooxygenase family.

It localises to the membrane. Its function is as follows. Highly reducing polyketide synthase; part of the gene cluster that mediates the biosynthesis of annullatin D, an alkylated aromatic polyketide with a fused dihydrobenzofuran lactone ring system that exhibits potent agonistic activities toward the cannabinoid receptors. AnuJ does not seem to play a role within the pathway. The annullatin backbone 2-hydroxymethyl-3-pentylphenol is assembled from one acetyl-CoA starter unit and 5 malonyl-CoA elongation units by cooperation of the highly reducing polyketide synthase anuA, the short-chain dehydrogenase anuB and the oxidoreductase anuC, before being hydroxylated at the C-5 alkyl chain by the cytochrome P450 monooxygenase anuE to form (8S)-annullatin E. The prenyltransferase anuH subsequently installs one isoprenyl group at the benzene ring to form (8S)-annullatin J. Enzymatic or nonenzymatic dihydro-benzofuran ring formation between the prenyl and the phenolic hydroxyl groups in (8S)-annullatin J results in two diastereomers (2S,9S)-annullatin H and compound 12. The intermediate (2S,9S)-annullatin H is then converted to (2S,9S)-annullatin D by the FAD-linked oxidoreductase anuG-catalyzed five-member lactone ring formation. The isomer 12 acts as a substrate for the short-chain dehydrogenase anuF and is oxidized to (2R)-annullatin F, which is subsequently acetylated by an acetyltransferase leading to (2R)-annullatin G formation. The remaining enzymes identified within the cluster, anuD, anuI and anuJ, seem not to be involved in annullatin biosynthesis. This Penicillium roqueforti (strain FM164) protein is FAD-dependent monooxygenase anuJ.